The following is a 154-amino-acid chain: Superoxide dismutase [Cu-Zn] (154 aa).

His47, His49, and His64 together coordinate Cu cation. Cys58 and Cys147 are disulfide-bonded. Zn(2+) is bound by residues His64, His72, His81, and Asp84. His121 is a binding site for Cu cation. Substrate is bound at residue Arg144.

This sequence belongs to the Cu-Zn superoxide dismutase family. In terms of assembly, homodimer. Requires Cu cation as cofactor. Zn(2+) is required as a cofactor.

The protein localises to the cytoplasm. It carries out the reaction 2 superoxide + 2 H(+) = H2O2 + O2. Destroys radicals which are normally produced within the cells and which are toxic to biological systems. The protein is Superoxide dismutase [Cu-Zn] (sodC) of Aspergillus fumigatus (strain ATCC MYA-4609 / CBS 101355 / FGSC A1100 / Af293) (Neosartorya fumigata).